Consider the following 308-residue polypeptide: 1,4-dihydroxy-2-naphthoate octaprenyltransferase (308 aa).

At 1–20 (MTEQQISRTQAWLESLRPKT) the chain is on the cytoplasmic side. A helical transmembrane segment spans residues 21–41 (LPLAFAAIIVGTALAWWQGHF). Position 42 (aspartate 42) is a topological domain, periplasmic. A helical transmembrane segment spans residues 43–63 (PLVALLALITAGLLQILSNLA). The Cytoplasmic segment spans residues 64 to 97 (NDYGDAVKGSDKPDRIGPLRGMQKGVITQQEMKR). The chain crosses the membrane as a helical span at residues 98 to 118 (ALIITVVLICLSGLALVAVAC). Residues 119–123 (HTLAD) are Periplasmic-facing. The chain crosses the membrane as a helical span at residues 124–144 (FVGFLILGGLSIIAAITYTVG). The Cytoplasmic portion of the chain corresponds to 145–148 (NRPY). A helical membrane pass occupies residues 149 to 169 (GYIGLGDISVLVFFGWLSVMG). Residues 170-176 (SWYLQAH) lie on the Periplasmic side of the membrane. A helical transmembrane segment spans residues 177 to 197 (TLIPALILPATACGLLATAVL). Residues 198–227 (NINNLRDINSDRENGKNTLVVRLGEVNARR) are Cytoplasmic-facing. The helical transmembrane segment at 228-247 (YHACLLMGSLVCLALFNLFS) threads the bilayer. Over 248 to 250 (LHS) the chain is Periplasmic. A helical transmembrane segment spans residues 251-270 (LWGWLFLLAAPLLVKQARYV). The Cytoplasmic portion of the chain corresponds to 271 to 286 (MREMDPVAMRPMLERT). A helical transmembrane segment spans residues 287-307 (VKGALLTNLLFVLGIFLSQWA). Residue alanine 308 is a topological domain, periplasmic.

The protein belongs to the MenA family. Type 1 subfamily.

Its subcellular location is the cell inner membrane. The catalysed reaction is an all-trans-polyprenyl diphosphate + 1,4-dihydroxy-2-naphthoate + H(+) = a 2-demethylmenaquinol + CO2 + diphosphate. The protein operates within quinol/quinone metabolism; menaquinone biosynthesis; menaquinol from 1,4-dihydroxy-2-naphthoate: step 1/2. Its function is as follows. Conversion of 1,4-dihydroxy-2-naphthoate (DHNA) to demethylmenaquinone (DMK). Attaches octaprenylpyrophosphate, a membrane-bound 40-carbon side chain to DHNA. The conversion of DHNA to DMK proceeds in three stages: the removal of the carboxyl group of DHNA as CO(2), the attachment of the isoprenoid side chain, and a quinol-to-quinone oxidation, which is thought to be spontaneous. The protein is 1,4-dihydroxy-2-naphthoate octaprenyltransferase of Escherichia coli (strain K12).